The primary structure comprises 446 residues: Gamma-glutamyl phosphate reductase (446 aa).

It belongs to the gamma-glutamyl phosphate reductase family.

Its subcellular location is the cytoplasm. It carries out the reaction L-glutamate 5-semialdehyde + phosphate + NADP(+) = L-glutamyl 5-phosphate + NADPH + H(+). It participates in amino-acid biosynthesis; L-proline biosynthesis; L-glutamate 5-semialdehyde from L-glutamate: step 2/2. Functionally, catalyzes the NADPH-dependent reduction of L-glutamate 5-phosphate into L-glutamate 5-semialdehyde and phosphate. The product spontaneously undergoes cyclization to form 1-pyrroline-5-carboxylate. In Sulfurihydrogenibium sp. (strain YO3AOP1), this protein is Gamma-glutamyl phosphate reductase.